Reading from the N-terminus, the 222-residue chain is Glutathione S-transferase alpha M14 (222 aa).

N-acetylmethionine is present on methionine 1. Residue alanine 2 is modified to N-acetylalanine; in Glutathione S-transferase alpha M14, N-terminally processed. The GST N-terminal domain maps to 3-83 (GKPILHYFNG…YIATKYNLYG (81 aa)). Lysine 4 bears the N6-succinyllysine mark. Glutathione-binding positions include tyrosine 9, 54 to 55 (QV), and 67 to 68 (QT). One can recognise a GST C-terminal domain in the interval 85–208 (DAKERALIDM…QPGSQRKPPM (124 aa)). The interval 199 to 222 (QPGSQRKPPMDAKKIRRSQEYFPD) is disordered. The span at 206–222 (PPMDAKKIRRSQEYFPD) shows a compositional bias: basic and acidic residues.

This sequence belongs to the GST superfamily. Alpha family. Homodimer or heterodimer of GSTA1 and GSTA2.

Its subcellular location is the cytoplasm. It carries out the reaction RX + glutathione = an S-substituted glutathione + a halide anion + H(+). The catalysed reaction is prostaglandin A2 + glutathione = prostaglandin A2-S-(R)-glutathione. It catalyses the reaction prostaglandin J2 + glutathione = prostaglandin J2-S-(R)-glutathione. The enzyme catalyses (13S)-hydroperoxy-(9Z,11E)-octadecadienoate + 2 glutathione = (13S)-hydroxy-(9Z,11E)-octadecadienoate + glutathione disulfide + H2O. It carries out the reaction androst-5-ene-3,17-dione = androst-4-ene-3,17-dione. Its function is as follows. Glutathione S-transferase that catalyzes the nucleophilic attack of the sulfur atom of glutathione on the electrophilic groups of a wide range of exogenous and endogenous compounds. Involved in the formation of glutathione conjugates of both prostaglandin A2 (PGA2) and prostaglandin J2 (PGJ2). It also catalyzes the isomerization of D5-androstene-3,17-dione (AD) into D4-androstene-3,17-dione and may therefore play an important role in hormone biosynthesis. Through its glutathione-dependent peroxidase activity toward the fatty acid hydroperoxide (13S)-hydroperoxy-(9Z,11E)-octadecadienoate/13-HPODE it is also involved in the metabolism of oxidized linoleic acid. The chain is Glutathione S-transferase alpha M14 from Sus scrofa (Pig).